A 594-amino-acid polypeptide reads, in one-letter code: Trehalase (594 aa).

Residues 1-27 (MDFLNKKIQKILFICILSFLIVNLTKS) form the signal peptide. Residues Asn-56, Asn-70, Asn-97, and Asn-166 are each glycosylated (N-linked (GlcNAc...) asparagine). Residues Arg-190, 197 to 198 (WD), and Asn-234 each bind substrate. Residue Asn-242 is glycosylated (N-linked (GlcNAc...) asparagine). 243 to 245 (RSQ) contacts substrate. Asn-261 and Asn-305 each carry an N-linked (GlcNAc...) asparagine glycan. Substrate contacts are provided by residues 312–314 (RPE) and Gly-346. The Proton donor/acceptor role is filled by Asp-348. Residues Asn-361, Asn-395, Asn-513, and Asn-537 are each glycosylated (N-linked (GlcNAc...) asparagine). Glu-549 serves as the catalytic Proton donor/acceptor. Glu-564 contacts substrate.

Belongs to the glycosyl hydrolase 37 family.

The enzyme catalyses alpha,alpha-trehalose + H2O = alpha-D-glucose + beta-D-glucose. This chain is Trehalase (treh), found in Dictyostelium discoideum (Social amoeba).